Consider the following 598-residue polypeptide: Aluminum-activated malate transporter 9 (598 aa).

6 consecutive transmembrane segments (helical) span residues 88-108 (IVFS…IFYQ), 117-137 (YSVW…GATL), 144-164 (ALGT…STLF), 170-190 (IFCT…KLYP), 194-214 (AYEY…ISGF), and 227-247 (FLLI…IYPI).

This sequence belongs to the aromatic acid exporter (TC 2.A.85) family. Expressed in hypocotyls, leaves, roots, flowers, sepals and stamina. In leaves, expressed almost exclusively in mesophyll cells.

The protein resides in the vacuole membrane. With respect to regulation, slow activation by external aluminum. Its function is as follows. Vacuolar malate channel. Has a higher selectivity for malate than for fumarate. Also exhibits a weak chloride conductance. The polypeptide is Aluminum-activated malate transporter 9 (ALMT9) (Arabidopsis thaliana (Mouse-ear cress)).